The chain runs to 509 residues: ATP synthase subunit alpha, mitochondrial (509 aa).

171–178 provides a ligand contact to ATP; it reads GDRQTGKT.

The protein belongs to the ATPase alpha/beta chains family. In terms of assembly, F-type ATPases have 2 components, CF(1) - the catalytic core - and CF(0) - the membrane proton channel. CF(1) has five subunits: alpha(3), beta(3), gamma(1), delta(1), epsilon(1). CF(0) has three main subunits: a, b and c.

It is found in the mitochondrion. The protein localises to the mitochondrion inner membrane. In terms of biological role, mitochondrial membrane ATP synthase (F(1)F(0) ATP synthase or Complex V) produces ATP from ADP in the presence of a proton gradient across the membrane which is generated by electron transport complexes of the respiratory chain. F-type ATPases consist of two structural domains, F(1) - containing the extramembraneous catalytic core, and F(0) - containing the membrane proton channel, linked together by a central stalk and a peripheral stalk. During catalysis, ATP synthesis in the catalytic domain of F(1) is coupled via a rotary mechanism of the central stalk subunits to proton translocation. Subunits alpha and beta form the catalytic core in F(1). Rotation of the central stalk against the surrounding alpha(3)beta(3) subunits leads to hydrolysis of ATP in three separate catalytic sites on the beta subunits. Subunit alpha does not bear the catalytic high-affinity ATP-binding sites. The polypeptide is ATP synthase subunit alpha, mitochondrial (ATPA) (Oryza sativa subsp. indica (Rice)).